The following is a 271-amino-acid chain: Putative pyrimidine-specific ribonucleoside hydrolase RihB (271 aa).

2 residues coordinate substrate: Gln-185 and His-197.

It belongs to the IUNH family. RihB subfamily.

The catalysed reaction is a pyrimidine ribonucleoside + H2O = a pyrimidine nucleobase + D-ribose. The polypeptide is Putative pyrimidine-specific ribonucleoside hydrolase RihB (rihB) (Shigella dysenteriae serotype 1 (strain Sd197)).